A 424-amino-acid polypeptide reads, in one-letter code: MYPYSDADAFRRHPERAKSSQLRTSAVDTRSAFARDRARVLHSAALRRLADKTQVVGPNDGDTPRTRLTHSLEVAQIARGIGAGLDLDPDLCDLAGLCHDIGHPPYGHNGENALNEVAAACGGFEGNAQTLRILTRLEPKIVSDEGASFGLNLSRAALDAACKYPWAKTNADGSVNKKYSAYDEDAEILDWIRQGHEDLRPPIEAQVMDFSDDIAYSVHDVEDGIVSGRIDLKVLWDLVELAALADKGAAAFGGSPAELIEGAASLRELPVVAAAADFDFSLRSYAALKAMTSELVGRYVGSTIESTKKTHAGIDVGRMYGDLIIPETAASEVKLLKTLAVLYVMDDPGHLARQNRQRDRIFRVFDYLVLGAPGSLDPMYRQWFIEANSESEQIRVIVDQIASMTESRLERLARNAADISGFLG.

Residues 1–24 form a disordered region; that stretch reads MYPYSDADAFRRHPERAKSSQLRT. A compositionally biased stretch (basic and acidic residues) spans 8–18; sequence DAFRRHPERAK. One can recognise an HD domain in the interval 67–217; that stretch reads RLTHSLEVAQ…MDFSDDIAYS (151 aa).

The protein belongs to the dGTPase family. Type 2 subfamily.

The polypeptide is Deoxyguanosinetriphosphate triphosphohydrolase-like protein (Corynebacterium glutamicum (strain R)).